A 206-amino-acid chain; its full sequence is Ribonuclease HII (206 aa).

Residues 1-206 (MKVLGIDEAG…SWATVQKKKQ (206 aa)) form the RNase H type-2 domain. Asp-7, Glu-8, and Asp-105 together coordinate a divalent metal cation.

The protein belongs to the RNase HII family. It depends on Mn(2+) as a cofactor. Mg(2+) serves as cofactor.

It is found in the cytoplasm. It catalyses the reaction Endonucleolytic cleavage to 5'-phosphomonoester.. In terms of biological role, endonuclease that specifically degrades the RNA of RNA-DNA hybrids. This Methanothermobacter thermautotrophicus (strain ATCC 29096 / DSM 1053 / JCM 10044 / NBRC 100330 / Delta H) (Methanobacterium thermoautotrophicum) protein is Ribonuclease HII (rnhB).